The primary structure comprises 149 residues: CCAAT/enhancer-binding protein gamma (149 aa).

Positions 1 to 12 (MSKVSQQNSTPG) are enriched in polar residues. A disordered region spans residues 1–92 (MSKVSQQNST…SKQKAQDTLQ (92 aa)). Residue Lys3 forms a Glycyl lysine isopeptide (Lys-Gly) (interchain with G-Cter in SUMO2) linkage. Low complexity predominate over residues 28–37 (LQQVPQLVPA). Positions 56–72 (SPMDRNSDEYRQRRERN) are enriched in basic and acidic residues. A bZIP domain is found at 62 to 125 (SDEYRQRRER…SVLKDLFLEH (64 aa)). The interval 66–93 (RQRRERNNMAVKKSRLKSKQKAQDTLQR) is basic motif. The leucine-zipper stretch occupies residues 97 to 118 (LKEENERLEAKIKLLTKELSVL). Residues 128-149 (NLADNVQPSSTENTTNPDKAGQ) form a disordered region. Residues 131–149 (DNVQPSSTENTTNPDKAGQ) are compositionally biased toward polar residues.

This sequence belongs to the bZIP family. C/EBP subfamily. As to quaternary structure, binds DNA as a dimer and can form stable heterodimers with CEBPA and CEBPB. Interacts with ZNF638; this interaction increases transcriptional activation.

Its subcellular location is the nucleus. Its function is as follows. Transcription factor that binds to the promoter and the enhancer regions of target genes. Binds to the enhancer element PRE-I (positive regulatory element-I) of the IL-4 gene. Binds to the promoter and the enhancer of the immunoglobulin heavy chain. Binds to GPE1, a cis-acting element in the G-CSF gene promoter. This Bos taurus (Bovine) protein is CCAAT/enhancer-binding protein gamma (CEBPG).